A 198-amino-acid polypeptide reads, in one-letter code: Cell division protein SepF (198 aa).

Positions 170–198 are disordered; the sequence is EVPQPPARPARPASTNPPAWGNETNRMAQ. A compositionally biased stretch (low complexity) spans 179–188; it reads ARPASTNPPA.

The protein belongs to the SepF family. Homodimer. Interacts with FtsZ.

It localises to the cytoplasm. Functionally, cell division protein that is part of the divisome complex and is recruited early to the Z-ring. Probably stimulates Z-ring formation, perhaps through the cross-linking of FtsZ protofilaments. Its function overlaps with FtsA. The chain is Cell division protein SepF from Nostoc sp. (strain PCC 7120 / SAG 25.82 / UTEX 2576).